The following is a 380-amino-acid chain: Gonadotropin-releasing hormone II receptor (380 aa).

At 1–40 (MSAVNGTPWGSSAREEVWAGSGVEVEGSELPTFSTAAKVR) the chain is on the extracellular side. A helical membrane pass occupies residues 41–60 (VGVTIVLFVSSAGGNLAVLW). At 61–76 (SVTRPQPSQLRPSPVR) the chain is on the cytoplasmic side. A helical transmembrane segment spans residues 77–96 (RLFAHLAAADLLVTFVVMPL). At 97-114 (DATWNITVQWLAGDIACR) the chain is on the extracellular side. N-linked (GlcNAc...) asparagine glycosylation is present at Asn-101. Cys-113 and Cys-188 are oxidised to a cystine. The chain crosses the membrane as a helical span at residues 115-136 (TLMFLKLMAMYAAAFLPVVIGL). Over 137 to 160 (DRQAAVLNPLGSRSGVRKLLGAAW) the chain is Cytoplasmic. Residues 161–178 (GLSFLLALPQLFLFHTVH) form a helical membrane-spanning segment. The Extracellular portion of the chain corresponds to 179–204 (RAGPVPFTQCATKGSFKARWQETTYN). The chain crosses the membrane as a helical span at residues 205–224 (LFTFCCLFLLPLTAMAICYS). The Cytoplasmic segment spans residues 225 to 278 (RIVLGVSSPRTRKGSHAPAGEFALRRSFDNRPRVRLRALRLALLVLLTFILCWT). The helical transmembrane segment at 279–297 (PYYLLGLWYWFSPSMLSEV) threads the bilayer. Residues 298–303 (PPSLSH) are Extracellular-facing. The helical transmembrane segment at 304 to 323 (ILFLFGLLNAPLDPLLYGAF) threads the bilayer. Residues 324-380 (TLGCRRGHQELSMDSSREEGSRRMFQQDIQALRQTEVQKTVTSRKAGETKDIPITSI) lie on the Cytoplasmic side of the membrane.

Belongs to the G-protein coupled receptor 1 family. Phosphorylated on the C-terminal cytoplasmic tail.

It localises to the cell membrane. In terms of biological role, receptor for gonadotropin releasing hormone II (GnRH II). This receptor mediates its action by association with G proteins that activate a phosphatidylinositol-calcium second messenger system. This chain is Gonadotropin-releasing hormone II receptor (GNRHR2), found in Callithrix jacchus (White-tufted-ear marmoset).